Here is a 93-residue protein sequence, read N- to C-terminus: Protein S100-A5 (93 aa).

EF-hand domains follow at residues 12 to 47 (MVTT…LAEK) and 48 to 83 (MKES…LCMA). Ca(2+) contacts are provided by T28, E33, D61, N63, D65, E67, and E72.

It belongs to the S-100 family. As to quaternary structure, homodimer.

In terms of biological role, binds calcium, zinc and copper. One subunit can simultaneously bind 2 calcium ions or 2 copper ions plus 1 zinc ion. Calcium and copper ions compete for the same binding sites. The chain is Protein S100-A5 (S100a5) from Mus musculus (Mouse).